The following is a 486-amino-acid chain: 2-hydroxymuconic semialdehyde dehydrogenase (486 aa).

Catalysis depends on residues E254 and C288.

This sequence belongs to the aldehyde dehydrogenase family.

The catalysed reaction is (2Z,4E)-2-hydroxy-6-oxohexa-2,4-dienoate + NAD(+) + H2O = (2Z,4E)-2-hydroxyhexa-2,4-dienedioate + NADH + 2 H(+). The protein operates within aromatic compound metabolism; benzoate degradation via hydroxylation. In terms of biological role, 2-hydroxymuconic acid semialdehyde can be converted to 2-hydroxypent-2,4-dienoate either directly by the action of 2-hydroxymuconic semialdehyde hydrolase (HMSH) or by the action of three sequential enzymes, the first of which is HMSD. The protein is 2-hydroxymuconic semialdehyde dehydrogenase (dmpC) of Pseudomonas sp. (strain CF600).